The following is a 926-amino-acid chain: Storkhead-box protein 2 (926 aa).

6 disordered regions span residues 1–32 (MKKT…RSEK), 338–394 (EEEK…IPGG), 452–529 (EMPF…SYVD), 632–693 (GVKK…SLDK), 724–803 (LKSH…GTMQ), and 825–926 (LAPK…VTSV). Residues 18-32 (FSDRASDRMRSRSEK) show a composition bias toward basic and acidic residues. The segment covering 353–378 (HSGRSKKSRTHRKSHGKSRSHSKTRV) has biased composition (basic residues). Positions 379-394 (SKGDPSDGSHLDIPGG) are enriched in basic and acidic residues. Residues 463 to 472 (SHSKVHRSHS) are compositionally biased toward basic residues. The segment covering 473–495 (HTQDRRSRNERSNKAKERSRSMD) has biased composition (basic and acidic residues). Positions 518 to 529 (QDDQTPSQSYVD) are enriched in polar residues. 2 stretches are compositionally biased toward basic and acidic residues: residues 632-658 (GVKK…EESP) and 684-693 (HGAEPSSLDK). Residues 746–772 (LGTSAAQATPASQRQQESGGNQETSFD) are compositionally biased toward polar residues. The span at 785–799 (GANKNTEEEKNREDV) shows a compositional bias: basic and acidic residues. 2 stretches are compositionally biased toward polar residues: residues 847–884 (MDSS…QNPA) and 914–926 (KPSN…VTSV).

The protein is Storkhead-box protein 2 (STOX2) of Macaca fascicularis (Crab-eating macaque).